Consider the following 265-residue polypeptide: Acetylglutamate kinase (265 aa).

Substrate contacts are provided by residues 41 to 42 (GG), Arg-63, and Asn-156.

This sequence belongs to the acetylglutamate kinase family. ArgB subfamily.

It is found in the cytoplasm. It catalyses the reaction N-acetyl-L-glutamate + ATP = N-acetyl-L-glutamyl 5-phosphate + ADP. It participates in amino-acid biosynthesis; L-arginine biosynthesis; N(2)-acetyl-L-ornithine from L-glutamate: step 2/4. Functionally, catalyzes the ATP-dependent phosphorylation of N-acetyl-L-glutamate. In Brevibacillus brevis (strain 47 / JCM 6285 / NBRC 100599), this protein is Acetylglutamate kinase.